Consider the following 428-residue polypeptide: Acetyltransferase sirH (428 aa).

The N-linked (GlcNAc...) asparagine glycan is linked to N8. A run of 6 helical transmembrane segments spans residues 33–53 (LLTP…PGPL), 55–75 (VIVG…HWVS), 78–98 (AFFM…LMFV), 305–325 (LYVG…LIPS), 329–349 (GWGM…EDIL), and 366–386 (FLGY…PVGF).

Belongs to the wax synthase family.

The protein localises to the membrane. The protein operates within polyketide biosynthesis. In terms of biological role, acetyltransferase; part of the gene cluster that mediates the biosynthesis of asperlin, a polyketide showing anti-inflammatory, antitumor and antibiotic activities. The first step of the asperlin biosynthesis is the production of the intermediate 2,4,6-octatrienoic acid by the highly redusing polyketide synthase alnA with cleavage of the PKS product by the esterase alnB. 2,4,6-octatrienoic acid is further converted to asperlin via several steps involving the remaining enzymes from the cluster. In Emericella nidulans (strain FGSC A4 / ATCC 38163 / CBS 112.46 / NRRL 194 / M139) (Aspergillus nidulans), this protein is Acetyltransferase sirH.